The following is a 197-amino-acid chain: ATP synthase subunit delta (197 aa).

A compositionally biased stretch (low complexity) spans 1–16 (MSSAVSASPQAASPQQ). The tract at residues 1-20 (MSSAVSASPQAASPQQDRTS) is disordered.

Belongs to the ATPase delta chain family. F-type ATPases have 2 components, F(1) - the catalytic core - and F(0) - the membrane proton channel. F(1) has five subunits: alpha(3), beta(3), gamma(1), delta(1), epsilon(1). F(0) has three main subunits: a(1), b(2) and c(10-14). The alpha and beta chains form an alternating ring which encloses part of the gamma chain. F(1) is attached to F(0) by a central stalk formed by the gamma and epsilon chains, while a peripheral stalk is formed by the delta and b chains.

Its subcellular location is the cell inner membrane. Its function is as follows. F(1)F(0) ATP synthase produces ATP from ADP in the presence of a proton or sodium gradient. F-type ATPases consist of two structural domains, F(1) containing the extramembraneous catalytic core and F(0) containing the membrane proton channel, linked together by a central stalk and a peripheral stalk. During catalysis, ATP synthesis in the catalytic domain of F(1) is coupled via a rotary mechanism of the central stalk subunits to proton translocation. This protein is part of the stalk that links CF(0) to CF(1). It either transmits conformational changes from CF(0) to CF(1) or is implicated in proton conduction. This Acidiphilium cryptum (strain JF-5) protein is ATP synthase subunit delta.